The sequence spans 121 residues: Large ribosomal subunit protein bL21 (121 aa).

The protein belongs to the bacterial ribosomal protein bL21 family. As to quaternary structure, part of the 50S ribosomal subunit. Contacts protein L20.

Its function is as follows. This protein binds to 23S rRNA in the presence of protein L20. The protein is Large ribosomal subunit protein bL21 of Synechococcus sp. (strain CC9605).